The following is a 455-amino-acid chain: Adenylyltransferase and sulfurtransferase MOCS3 (455 aa).

Residues Gly-90, Asp-111, 118–122, Lys-135, and 179–180 each bind ATP; these read SNLAR and DN. Residues 156–236 form an interaction with NFS1 region; it reads AQALTPATAL…RPPPAETVTS (81 aa). Residues Cys-220 and Cys-223 each coordinate Zn(2+). Cys-237 functions as the Glycyl thioester intermediate; for adenylyltransferase activity in the catalytic mechanism. Zn(2+)-binding residues include Cys-295 and Cys-298. An intrachain disulfide couples Cys-314 to Cys-322. Residues 345-453 form the Rhodanese domain; that stretch reads SRSPHLLLDV…WAAKIDGTFP (109 aa). Residue Cys-410 is the Cysteine persulfide intermediate; for sulfurtransferase activity of the active site. At Cys-410 the chain carries Cysteine persulfide.

This sequence in the N-terminal section; belongs to the HesA/MoeB/ThiF family. UBA4 subfamily. Interacts with NFS1. Requires Zn(2+) as cofactor.

Its subcellular location is the cytoplasm. The protein resides in the cytosol. The catalysed reaction is [molybdopterin-synthase sulfur-carrier protein]-C-terminal Gly-Gly + ATP + H(+) = [molybdopterin-synthase sulfur-carrier protein]-C-terminal Gly-Gly-AMP + diphosphate. The enzyme catalyses [molybdopterin-synthase sulfur-carrier protein]-C-terminal Gly-Gly-AMP + S-sulfanyl-L-cysteinyl-[cysteine desulfurase] + AH2 = [molybdopterin-synthase sulfur-carrier protein]-C-terminal-Gly-aminoethanethioate + L-cysteinyl-[cysteine desulfurase] + A + AMP + 2 H(+). It participates in tRNA modification; 5-methoxycarbonylmethyl-2-thiouridine-tRNA biosynthesis. The protein operates within cofactor biosynthesis; molybdopterin biosynthesis. Its function is as follows. Plays a central role in 2-thiolation of mcm(5)S(2)U at tRNA wobble positions of cytosolic tRNA(Lys), tRNA(Glu) and tRNA(Gln). Also essential during biosynthesis of the molybdenum cofactor. Acts by mediating the C-terminal thiocarboxylation of sulfur carriers URM1 and MOCS2A. Its N-terminus first activates URM1 and MOCS2A as acyl-adenylates (-COAMP), then the persulfide sulfur on the catalytic cysteine is transferred to URM1 and MOCS2A to form thiocarboxylation (-COSH) of their C-terminus. The reaction probably involves hydrogen sulfide that is generated from the persulfide intermediate and that acts as a nucleophile towards URM1 and MOCS2A. Subsequently, a transient disulfide bond is formed. Does not use thiosulfate as sulfur donor; NFS1 acting as a sulfur donor for thiocarboxylation reactions. The protein is Adenylyltransferase and sulfurtransferase MOCS3 of Bos taurus (Bovine).